Reading from the N-terminus, the 339-residue chain is Scoulerine-9-O-methyltransferase 3 (339 aa).

Met161 lines the S-adenosyl-L-methionine pocket. Asp164 is a binding site for substrate. S-adenosyl-L-methionine contacts are provided by residues Thr165, Gly191, Asp214, 228–229 (DV), and Lys242. 243 to 247 (SILHE) provides a ligand contact to substrate. The active-site Proton acceptor is His246.

Belongs to the class I-like SAM-binding methyltransferase superfamily. Cation-independent O-methyltransferase family. COMT subfamily. As to quaternary structure, homodimer. Forms heterodimer with SOMT2. The heterodimer SOMT2-SOMT3 possesses 3-O-acetyl-4'-O-demethylpapaveroxine 4'-O-methyltransferase activity, where SOMT2 is the catalytic subunit. Highly expressed in capsules. Expressed is stems. Expressed at low levels in roots.

It catalyses the reaction (S)-scoulerine + S-adenosyl-L-methionine = (S)-tetrahydrocolumbamine + S-adenosyl-L-homocysteine + H(+). It functions in the pathway alkaloid biosynthesis. Methyltransferase involved in the biosynthesis of the benzylisoquinoline alkaloid noscapine. Catalyzes the conversion of (S)-scoulerine to (S)-tetrahydrocolumbamine. This Papaver somniferum (Opium poppy) protein is Scoulerine-9-O-methyltransferase 3.